Consider the following 254-residue polypeptide: Large ribosomal subunit protein uL4 (254 aa).

The segment at 45 to 70 (PWGNDPEAGKRTSAKGWGSGRGTARV) is disordered.

The protein belongs to the universal ribosomal protein uL4 family. As to quaternary structure, part of the 50S ribosomal subunit.

Its function is as follows. One of the primary rRNA binding proteins, this protein initially binds near the 5'-end of the 23S rRNA. It is important during the early stages of 50S assembly. It makes multiple contacts with different domains of the 23S rRNA in the assembled 50S subunit and ribosome. In terms of biological role, forms part of the polypeptide exit tunnel. The polypeptide is Large ribosomal subunit protein uL4 (Methanobrevibacter smithii (strain ATCC 35061 / DSM 861 / OCM 144 / PS)).